The following is a 372-amino-acid chain: N-methyl-L-tryptophan oxidase (372 aa).

4 to 34 serves as a coordination point for FAD; that stretch reads DLIIIGSGSVGAAAGYYATRAGLKVLMTDAH. Cysteine 307 carries the post-translational modification S-8alpha-FAD cysteine.

This sequence belongs to the MSOX/MTOX family. MTOX subfamily. Monomer. FAD serves as cofactor.

It catalyses the reaction N(alpha)-methyl-L-tryptophan + O2 + H2O = L-tryptophan + formaldehyde + H2O2. Catalyzes the oxidative demethylation of N-methyl-L-tryptophan. The polypeptide is N-methyl-L-tryptophan oxidase (Salmonella arizonae (strain ATCC BAA-731 / CDC346-86 / RSK2980)).